Here is a 307-residue protein sequence, read N- to C-terminus: Ribosomal RNA small subunit methyltransferase A (307 aa).

S-adenosyl-L-methionine contacts are provided by N35, V37, G62, E83, D113, and N136.

This sequence belongs to the class I-like SAM-binding methyltransferase superfamily. rRNA adenine N(6)-methyltransferase family. RsmA subfamily.

The protein resides in the cytoplasm. The enzyme catalyses adenosine(1518)/adenosine(1519) in 16S rRNA + 4 S-adenosyl-L-methionine = N(6)-dimethyladenosine(1518)/N(6)-dimethyladenosine(1519) in 16S rRNA + 4 S-adenosyl-L-homocysteine + 4 H(+). Its function is as follows. Specifically dimethylates two adjacent adenosines (A1518 and A1519) in the loop of a conserved hairpin near the 3'-end of 16S rRNA in the 30S particle. May play a critical role in biogenesis of 30S subunits. In Bifidobacterium longum (strain DJO10A), this protein is Ribosomal RNA small subunit methyltransferase A.